The primary structure comprises 448 residues: uncharacterized protein (448 aa).

Polar residues predominate over residues 428–440 (PFKTDCDPNNDND). The tract at residues 428 to 448 (PFKTDCDPNNDNDLTPPAVFG) is disordered.

This is an uncharacterized protein from Mycoplasma pneumoniae (strain ATCC 29342 / M129 / Subtype 1) (Mycoplasmoides pneumoniae).